The primary structure comprises 186 residues: Probable RNA 2'-phosphotransferase (186 aa).

It belongs to the KptA/TPT1 family.

Removes the 2'-phosphate from RNA via an intermediate in which the phosphate is ADP-ribosylated by NAD followed by a presumed transesterification to release the RNA and generate ADP-ribose 1''-2''-cyclic phosphate (APPR&gt;P). May function as an ADP-ribosylase. The sequence is that of Probable RNA 2'-phosphotransferase from Pectobacterium carotovorum subsp. carotovorum (strain PC1).